Consider the following 126-residue polypeptide: Small ribosomal subunit protein eS6 (126 aa).

The protein belongs to the eukaryotic ribosomal protein eS6 family.

In Nanoarchaeum equitans (strain Kin4-M), this protein is Small ribosomal subunit protein eS6.